Consider the following 1029-residue polypeptide: 2-oxoglutarate dehydrogenase, mitochondrial (1029 aa).

Thiamine diphosphate-binding residues include arginine 317, aspartate 415, asparagine 448, isoleucine 450, and glutamine 676. The Mg(2+) site is built by aspartate 415, asparagine 448, and isoleucine 450.

Belongs to the alpha-ketoglutarate dehydrogenase family. In terms of assembly, homodimer. Component of the 2-oxoglutarate dehydrogenase complex. Requires thiamine diphosphate as cofactor. Mg(2+) is required as a cofactor.

The protein resides in the mitochondrion matrix. It catalyses the reaction N(6)-[(R)-lipoyl]-L-lysyl-[protein] + 2-oxoglutarate + H(+) = N(6)-[(R)-S(8)-succinyldihydrolipoyl]-L-lysyl-[protein] + CO2. The 2-oxoglutarate dehydrogenase complex catalyzes the overall conversion of 2-oxoglutarate to succinyl-CoA and CO(2). It contains multiple copies of three enzymatic components: 2-oxoglutarate dehydrogenase (E1), dihydrolipoamide succinyltransferase (E2) and lipoamide dehydrogenase (E3). This Caenorhabditis elegans protein is 2-oxoglutarate dehydrogenase, mitochondrial (ogdh-1).